Here is a 268-residue protein sequence, read N- to C-terminus: Putative S-adenosyl-L-methionine-dependent methyltransferase MAP_0663 (268 aa).

S-adenosyl-L-methionine-binding positions include Asp-124 and 153–154; that span reads DL.

This sequence belongs to the UPF0677 family.

Exhibits S-adenosyl-L-methionine-dependent methyltransferase activity. This chain is Putative S-adenosyl-L-methionine-dependent methyltransferase MAP_0663, found in Mycolicibacterium paratuberculosis (strain ATCC BAA-968 / K-10) (Mycobacterium paratuberculosis).